The primary structure comprises 88 residues: Apolipoprotein C-I (88 aa).

An N-terminal signal peptide occupies residues 1 to 26 (MRLFISLPVLIVVLAMALEGPAPAQA).

This sequence belongs to the apolipoprotein C1 family.

It is found in the secreted. In terms of biological role, inhibitor of lipoprotein binding to the low density lipoprotein (LDL) receptor, LDL receptor-related protein, and very low density lipoprotein (VLDL) receptor. Associates with high density lipoproteins (HDL) and the triacylglycerol-rich lipoproteins in the plasma and makes up about 10% of the protein of the VLDL and 2% of that of HDL. Appears to interfere directly with fatty acid uptake and is also the major plasma inhibitor of cholesteryl ester transfer protein (CETP). Modulates the interaction of APOE with beta-migrating VLDL and inhibits binding of beta-VLDL to the LDL receptor-related protein. Binds free fatty acids and reduces their intracellular esterification. In Myodes glareolus (Bank vole), this protein is Apolipoprotein C-I (APOC1).